The following is a 326-amino-acid chain: Archaeal actin homolog (326 aa).

ATP is bound by residues 10 to 14, Ser-179, Gln-231, 285 to 288, and Gln-311; these read YGDTK and GGAN.

The protein belongs to the thermophilic archaeal actin family.

Functionally, polymerizes into bundles of filaments. Polymerization requires NTP and is optimal with ATP, but GTP, UTP, CTP, and even the deoxy form of NTP can also support the polymerization reaction. The polypeptide is Archaeal actin homolog (Thermoplasma volcanium (strain ATCC 51530 / DSM 4299 / JCM 9571 / NBRC 15438 / GSS1)).